We begin with the raw amino-acid sequence, 391 residues long: Elongation factor Tu (391 aa).

The tr-type G domain occupies 10–201 (KPHVNIGTIG…EVDNYIPTPE (192 aa)). The segment at 19-26 (GHVDHGKT) is G1. 19–26 (GHVDHGKT) contributes to the GTP binding site. Thr-26 provides a ligand contact to Mg(2+). The G2 stretch occupies residues 55 to 59 (GITIS). The segment at 76–79 (DCPG) is G3. Residues 76–80 (DCPGH) and 131–134 (NKVD) contribute to the GTP site. A G4 region spans residues 131–134 (NKVD). The segment at 169 to 171 (SAL) is G5.

Belongs to the TRAFAC class translation factor GTPase superfamily. Classic translation factor GTPase family. EF-Tu/EF-1A subfamily. As to quaternary structure, monomer.

It localises to the cytoplasm. It catalyses the reaction GTP + H2O = GDP + phosphate + H(+). In terms of biological role, GTP hydrolase that promotes the GTP-dependent binding of aminoacyl-tRNA to the A-site of ribosomes during protein biosynthesis. This is Elongation factor Tu from Bartonella henselae (strain ATCC 49882 / DSM 28221 / CCUG 30454 / Houston 1) (Rochalimaea henselae).